The chain runs to 67 residues: Large ribosomal subunit protein bL32 (67 aa).

The segment covering 1–19 (MAVPKRKMSRSNTRSRRSQ) has biased composition (basic residues). The segment at 1-22 (MAVPKRKMSRSNTRSRRSQWKA) is disordered.

The protein belongs to the bacterial ribosomal protein bL32 family.

This Kineococcus radiotolerans (strain ATCC BAA-149 / DSM 14245 / SRS30216) protein is Large ribosomal subunit protein bL32.